The chain runs to 456 residues: Tyrosine phenol-lyase (456 aa).

Lys257 bears the N6-(pyridoxal phosphate)lysine mark.

This sequence belongs to the beta-eliminating lyase family. Homotetramer. It depends on pyridoxal 5'-phosphate as a cofactor. In terms of processing, contains L-DOPA (3',4'-dihydroxyphenylalanine).

The protein resides in the cytoplasm. The enzyme catalyses L-tyrosine + H2O = phenol + pyruvate + NH4(+). In Enterobacter agglomerans (Erwinia herbicola), this protein is Tyrosine phenol-lyase (tpl).